The sequence spans 246 residues: 1-(5-phosphoribosyl)-5-[(5-phosphoribosylamino)methylideneamino] imidazole-4-carboxamide isomerase (246 aa).

Asp7 (proton acceptor) is an active-site residue. Asp130 functions as the Proton donor in the catalytic mechanism.

It belongs to the HisA/HisF family.

It localises to the cytoplasm. The catalysed reaction is 1-(5-phospho-beta-D-ribosyl)-5-[(5-phospho-beta-D-ribosylamino)methylideneamino]imidazole-4-carboxamide = 5-[(5-phospho-1-deoxy-D-ribulos-1-ylimino)methylamino]-1-(5-phospho-beta-D-ribosyl)imidazole-4-carboxamide. It participates in amino-acid biosynthesis; L-histidine biosynthesis; L-histidine from 5-phospho-alpha-D-ribose 1-diphosphate: step 4/9. This Sodalis glossinidius (strain morsitans) protein is 1-(5-phosphoribosyl)-5-[(5-phosphoribosylamino)methylideneamino] imidazole-4-carboxamide isomerase.